Reading from the N-terminus, the 518-residue chain is Prosaposin (518 aa).

An N-terminal signal peptide occupies residues 1-17 (MARRLLTLLGLLAAAVA). A propeptide spanning residues 18–60 (SPVLWQKDCAKGPEVWCQSLRTASQCGAVKHCQQNVWSKPAVN) is cleaved from the precursor. A Saposin A-type 1 domain is found at 19–59 (PVLWQKDCAKGPEVWCQSLRTASQCGAVKHCQQNVWSKPAV). 4 Saposin B-type domains span residues 60–143 (NSIP…QSLQ), 193–277 (TEDV…PSVK), 307–388 (TFSV…AANK), and 399–480 (AGGF…GAAK). Disulfide bonds link Cys64-Cys139, Cys67-Cys133, and Cys95-Cys107. Asn81 carries an N-linked (GlcNAc...) asparagine glycan. Residues 144–193 (KHLAAMKLQKQLQSNKIPELDFSELTSPFMANVPLLLYPQDKPKQKSKAT) constitute a propeptide that is removed on maturation. Disulfide bonds link Cys197–Cys273, Cys200–Cys267, and Cys229–Cys240. Residue Asn214 is glycosylated (N-linked (GlcNAc...) asparagine). The propeptide occupies 277-306 (KSVPLQTLVPAQVVHEVKMETVEKATVQEK). Intrachain disulfides connect Cys311/Cys384, Cys314/Cys378, and Cys342/Cys353. Residue Asn328 is glycosylated (N-linked (GlcNAc...) asparagine). The propeptide occupies 388 to 398 (KPPQQPVVVKP). 3 disulfides stabilise this stretch: Cys403–Cys476, Cys406–Cys470, and Cys434–Cys445. Asn420 carries an N-linked (GlcNAc...) asparagine glycan. Positions 480–518 (KKPLLGEDACVWGPGYWCKNMETAAQCNAVDHCRRHVWN) are excised as a propeptide. The region spanning 482–518 (PLLGEDACVWGPGYWCKNMETAAQCNAVDHCRRHVWN) is the Saposin A-type 2 domain.

In terms of assembly, saposin-B is a homodimer. In terms of processing, this precursor is proteolytically processed to 4 small peptides, which are similar to each other and are sphingolipid hydrolase activator proteins.

The protein localises to the lysosome. Its subcellular location is the secreted. The lysosomal degradation of sphingolipids takes place by the sequential action of specific hydrolases. Some of these enzymes require specific low-molecular mass, non-enzymatic proteins: the sphingolipids activator proteins (coproteins). Its function is as follows. Saposin-A and saposin-C stimulate the hydrolysis of glucosylceramide by beta-glucosylceramidase (EC 3.2.1.45) and galactosylceramide by beta-galactosylceramidase (EC 3.2.1.46). Saposin-C apparently acts by combining with the enzyme and acidic lipid to form an activated complex, rather than by solubilizing the substrate. In terms of biological role, saposin-B stimulates the hydrolysis of galacto-cerebroside sulfate by arylsulfatase A (EC 3.1.6.8), GM1 gangliosides by beta-galactosidase (EC 3.2.1.23) and globotriaosylceramide by alpha-galactosidase A (EC 3.2.1.22). Saposin-B forms a solubilizing complex with the substrates of the sphingolipid hydrolases. Functionally, saposin-D is a specific sphingomyelin phosphodiesterase activator (EC 3.1.4.12). In Gallus gallus (Chicken), this protein is Prosaposin (PSAP).